Here is a 256-residue protein sequence, read N- to C-terminus: Acetyl-coenzyme A carboxylase carboxyl transferase subunit alpha (256 aa).

Residues 1-236 (MSDVARILKE…KTAIVDELAE (236 aa)) form the CoA carboxyltransferase C-terminal domain.

Belongs to the AccA family. In terms of assembly, acetyl-CoA carboxylase is a heterohexamer composed of biotin carboxyl carrier protein (AccB), biotin carboxylase (AccC) and two subunits each of ACCase subunit alpha (AccA) and ACCase subunit beta (AccD).

The protein localises to the cytoplasm. It carries out the reaction N(6)-carboxybiotinyl-L-lysyl-[protein] + acetyl-CoA = N(6)-biotinyl-L-lysyl-[protein] + malonyl-CoA. Its pathway is lipid metabolism; malonyl-CoA biosynthesis; malonyl-CoA from acetyl-CoA: step 1/1. Component of the acetyl coenzyme A carboxylase (ACC) complex. First, biotin carboxylase catalyzes the carboxylation of biotin on its carrier protein (BCCP) and then the CO(2) group is transferred by the carboxyltransferase to acetyl-CoA to form malonyl-CoA. In Streptococcus thermophilus (strain CNRZ 1066), this protein is Acetyl-coenzyme A carboxylase carboxyl transferase subunit alpha.